The following is a 35-amino-acid chain: Peptide Hact-3 (35 aa).

In terms of tissue distribution, expressed in tentacles.

It localises to the nematocyst. It is found in the secreted. Peptide with unknown function. Does not exhibit antimicrobial activity against Escherichia coli and Staphylococcus aureus. In Heliofungia actiniformis (Mushroom coral), this protein is Peptide Hact-3.